Reading from the N-terminus, the 280-residue chain is Tryptophan synthase alpha chain (280 aa).

Active-site proton acceptor residues include glutamate 49 and aspartate 60.

Belongs to the TrpA family. As to quaternary structure, tetramer of two alpha and two beta chains.

The enzyme catalyses (1S,2R)-1-C-(indol-3-yl)glycerol 3-phosphate + L-serine = D-glyceraldehyde 3-phosphate + L-tryptophan + H2O. It participates in amino-acid biosynthesis; L-tryptophan biosynthesis; L-tryptophan from chorismate: step 5/5. Functionally, the alpha subunit is responsible for the aldol cleavage of indoleglycerol phosphate to indole and glyceraldehyde 3-phosphate. This is Tryptophan synthase alpha chain from Corynebacterium glutamicum (strain R).